The chain runs to 732 residues: Ribosomal RNA large subunit methyltransferase K/L (732 aa).

In terms of domain architecture, THUMP spans 50 to 162 (MAYRICLWSR…RGRLLLGLDL (113 aa)). The disordered stretch occupies residues 396–424 (TERETSSEGDEPQGASGATSRPGPRNDGA).

The protein belongs to the methyltransferase superfamily. RlmKL family.

Its subcellular location is the cytoplasm. The catalysed reaction is guanosine(2445) in 23S rRNA + S-adenosyl-L-methionine = N(2)-methylguanosine(2445) in 23S rRNA + S-adenosyl-L-homocysteine + H(+). It catalyses the reaction guanosine(2069) in 23S rRNA + S-adenosyl-L-methionine = N(2)-methylguanosine(2069) in 23S rRNA + S-adenosyl-L-homocysteine + H(+). Specifically methylates the guanine in position 2445 (m2G2445) and the guanine in position 2069 (m7G2069) of 23S rRNA. In Chromohalobacter salexigens (strain ATCC BAA-138 / DSM 3043 / CIP 106854 / NCIMB 13768 / 1H11), this protein is Ribosomal RNA large subunit methyltransferase K/L.